Consider the following 176-residue polypeptide: Large ribosomal subunit protein uL16 (176 aa).

This sequence belongs to the universal ribosomal protein uL16 family.

This chain is Large ribosomal subunit protein uL16, found in Thermoplasma volcanium (strain ATCC 51530 / DSM 4299 / JCM 9571 / NBRC 15438 / GSS1).